We begin with the raw amino-acid sequence, 266 residues long: Diphthine synthase (266 aa).

S-adenosyl-L-methionine contacts are provided by residues leucine 9, aspartate 85, isoleucine 88, 113-114, leucine 168, alanine 210, and histidine 235; that span reads TA.

The protein belongs to the diphthine synthase family. As to quaternary structure, homodimer.

It carries out the reaction 2-[(3S)-amino-3-carboxypropyl]-L-histidyl-[translation elongation factor 2] + 3 S-adenosyl-L-methionine = diphthine-[translation elongation factor 2] + 3 S-adenosyl-L-homocysteine + 3 H(+). Its pathway is protein modification; peptidyl-diphthamide biosynthesis. S-adenosyl-L-methionine-dependent methyltransferase that catalyzes the trimethylation of the amino group of the modified target histidine residue in translation elongation factor 2 (EF-2), to form an intermediate called diphthine. The three successive methylation reactions represent the second step of diphthamide biosynthesis. The protein is Diphthine synthase of Natronomonas pharaonis (strain ATCC 35678 / DSM 2160 / CIP 103997 / JCM 8858 / NBRC 14720 / NCIMB 2260 / Gabara) (Halobacterium pharaonis).